A 298-amino-acid chain; its full sequence is uncharacterized protein (298 aa).

Residues 5-62 (TSLSAMRIFEAAARLGSFRAAAEELNLSPSAVSHAIMRLERDLGVALFERTTRSVSLT) enclose the HTH lysR-type domain. Residues 22–42 (FRAAAEELNLSPSAVSHAIMR) constitute a DNA-binding region (H-T-H motif).

It belongs to the LysR transcriptional regulatory family.

This is an uncharacterized protein from Sinorhizobium fredii (strain NBRC 101917 / NGR234).